We begin with the raw amino-acid sequence, 329 residues long: Ribosomal RNA small subunit methyltransferase H (329 aa).

Residues 34 to 36, D59, F86, D112, and Q119 each bind S-adenosyl-L-methionine; that span reads GGH.

The protein belongs to the methyltransferase superfamily. RsmH family.

The protein localises to the cytoplasm. It carries out the reaction cytidine(1402) in 16S rRNA + S-adenosyl-L-methionine = N(4)-methylcytidine(1402) in 16S rRNA + S-adenosyl-L-homocysteine + H(+). Its function is as follows. Specifically methylates the N4 position of cytidine in position 1402 (C1402) of 16S rRNA. In Chlorobium phaeobacteroides (strain DSM 266 / SMG 266 / 2430), this protein is Ribosomal RNA small subunit methyltransferase H.